Consider the following 72-residue polypeptide: Translation initiation factor IF-1 (72 aa).

The S1-like domain occupies 1-72 (MSKQDVIELE…SRGRITWRKK (72 aa)).

Belongs to the IF-1 family. As to quaternary structure, component of the 30S ribosomal translation pre-initiation complex which assembles on the 30S ribosome in the order IF-2 and IF-3, IF-1 and N-formylmethionyl-tRNA(fMet); mRNA recruitment can occur at any time during PIC assembly.

Its subcellular location is the cytoplasm. In terms of biological role, one of the essential components for the initiation of protein synthesis. Stabilizes the binding of IF-2 and IF-3 on the 30S subunit to which N-formylmethionyl-tRNA(fMet) subsequently binds. Helps modulate mRNA selection, yielding the 30S pre-initiation complex (PIC). Upon addition of the 50S ribosomal subunit IF-1, IF-2 and IF-3 are released leaving the mature 70S translation initiation complex. The sequence is that of Translation initiation factor IF-1 from Alkaliphilus oremlandii (strain OhILAs) (Clostridium oremlandii (strain OhILAs)).